Consider the following 472-residue polypeptide: Serine/threonine-protein kinase sax-1 (472 aa).

The Protein kinase domain occupies 87–381; that stretch reads FESLKVIGRG…LDEIKQCPFF (295 aa). Residues 93–101 and lysine 116 each bind ATP; that span reads IGRGAFGEV. The Proton acceptor role is filled by aspartate 210. Positions 382-452 constitute an AGC-kinase C-terminal domain; the sequence is RRIDWNHIRE…KRFDGLTQKM (71 aa).

The protein belongs to the protein kinase superfamily. AGC Ser/Thr protein kinase family. It depends on Mg(2+) as a cofactor.

Its subcellular location is the cytoplasm. The protein localises to the nucleus. It carries out the reaction L-seryl-[protein] + ATP = O-phospho-L-seryl-[protein] + ADP + H(+). The catalysed reaction is L-threonyl-[protein] + ATP = O-phospho-L-threonyl-[protein] + ADP + H(+). Functionally, acts with sax-2 to restrict the growth of both primary and secondary neurites. Regulates mechanosensory tiling by controlling the termination point of sensory dendrites. The sequence is that of Serine/threonine-protein kinase sax-1 from Caenorhabditis briggsae.